Here is a 197-residue protein sequence, read N- to C-terminus: Protein GrpE (197 aa).

Basic and acidic residues predominate over residues 1–12 (MTDSDGKTDKSG). The interval 1–35 (MTDSDGKTDKSGEPAAEVEPVVSKPYVMPDDPEDD) is disordered.

The protein belongs to the GrpE family. As to quaternary structure, homodimer.

The protein resides in the cytoplasm. In terms of biological role, participates actively in the response to hyperosmotic and heat shock by preventing the aggregation of stress-denatured proteins, in association with DnaK and GrpE. It is the nucleotide exchange factor for DnaK and may function as a thermosensor. Unfolded proteins bind initially to DnaJ; upon interaction with the DnaJ-bound protein, DnaK hydrolyzes its bound ATP, resulting in the formation of a stable complex. GrpE releases ADP from DnaK; ATP binding to DnaK triggers the release of the substrate protein, thus completing the reaction cycle. Several rounds of ATP-dependent interactions between DnaJ, DnaK and GrpE are required for fully efficient folding. This chain is Protein GrpE, found in Nitrobacter winogradskyi (strain ATCC 25391 / DSM 10237 / CIP 104748 / NCIMB 11846 / Nb-255).